We begin with the raw amino-acid sequence, 155 residues long: Ribosomal RNA large subunit methyltransferase H (155 aa).

Residues L72, G103, and 122–127 contribute to the S-adenosyl-L-methionine site; that span reads LSDLTL.

It belongs to the RNA methyltransferase RlmH family. As to quaternary structure, homodimer.

The protein localises to the cytoplasm. It carries out the reaction pseudouridine(1915) in 23S rRNA + S-adenosyl-L-methionine = N(3)-methylpseudouridine(1915) in 23S rRNA + S-adenosyl-L-homocysteine + H(+). Specifically methylates the pseudouridine at position 1915 (m3Psi1915) in 23S rRNA. In Variovorax paradoxus (strain S110), this protein is Ribosomal RNA large subunit methyltransferase H.